The primary structure comprises 342 residues: Protein RecA (342 aa).

65–72 (GPESSGKT) serves as a coordination point for ATP.

This sequence belongs to the RecA family.

It is found in the cytoplasm. In terms of biological role, can catalyze the hydrolysis of ATP in the presence of single-stranded DNA, the ATP-dependent uptake of single-stranded DNA by duplex DNA, and the ATP-dependent hybridization of homologous single-stranded DNAs. It interacts with LexA causing its activation and leading to its autocatalytic cleavage. In Caldanaerobacter subterraneus subsp. tengcongensis (strain DSM 15242 / JCM 11007 / NBRC 100824 / MB4) (Thermoanaerobacter tengcongensis), this protein is Protein RecA.